The sequence spans 323 residues: o-succinylbenzoate synthase (323 aa).

The active-site Proton donor is the Lys134. Asp162, Glu191, and Asp214 together coordinate Mg(2+). Residue Lys236 is the Proton acceptor of the active site.

It belongs to the mandelate racemase/muconate lactonizing enzyme family. MenC type 1 subfamily. A divalent metal cation is required as a cofactor.

It carries out the reaction (1R,6R)-6-hydroxy-2-succinyl-cyclohexa-2,4-diene-1-carboxylate = 2-succinylbenzoate + H2O. Its pathway is quinol/quinone metabolism; 1,4-dihydroxy-2-naphthoate biosynthesis; 1,4-dihydroxy-2-naphthoate from chorismate: step 4/7. The protein operates within quinol/quinone metabolism; menaquinone biosynthesis. Converts 2-succinyl-6-hydroxy-2,4-cyclohexadiene-1-carboxylate (SHCHC) to 2-succinylbenzoate (OSB). The polypeptide is o-succinylbenzoate synthase (Photorhabdus laumondii subsp. laumondii (strain DSM 15139 / CIP 105565 / TT01) (Photorhabdus luminescens subsp. laumondii)).